Consider the following 1305-residue polypeptide: Adenylate cyclase type 9 (1305 aa).

The Cytoplasmic segment spans residues 1–110; the sequence is MASPVNQQLL…CFPQTQRRFR (110 aa). Residues 46–55 show a composition bias toward low complexity; it reads ISSSCSSGES. The disordered stretch occupies residues 46-71; it reads ISSSCSSGESGVKKTGGSGGARRQKK. Residues 111-131 traverse the membrane as a helical segment; sequence YALMYLSVAGLLWSIYFSVHM. Topologically, residues 132–134 are extracellular; the sequence is KTK. The chain crosses the membrane as a helical span at residues 135–155; sequence LVSHLVPTLCFLIVCLGFFFF. Residues 156–164 lie on the Cytoplasmic side of the membrane; that stretch reads TFTKSYARH. A helical transmembrane segment spans residues 165–185; sequence CTAISLLVTLLVFTLTLASQF. The Extracellular portion of the chain corresponds to 186–209; that stretch reads QVLNPGLGSDSLSNLTSFSATGSS. N-linked (GlcNAc...) asparagine glycosylation occurs at N199. A helical membrane pass occupies residues 210–229; it reads SCLSQVGSFSICVEVLLLLY. Residues 230–235 are Cytoplasmic-facing; it reads TVMHLP. Residues 236 to 253 traverse the membrane as a helical segment; that stretch reads LYLSACLGVAYSILFETF. At 254 to 274 the chain is on the extracellular side; that stretch reads GYHFRDESCFVLLVGRMAHWE. A helical membrane pass occupies residues 275-295; it reads LLSKALLHVCIHAIGVHLFIM. The Cytoplasmic portion of the chain corresponds to 296–778; the sequence is SEVRSRSTFL…VKTFASATFS (483 aa). Positions 343–369 are disordered; the sequence is QGDDESENSVKRHSASSPKSRKKKSSI. Residues 353 to 368 are compositionally biased toward basic residues; it reads KRHSASSPKSRKKKSS. Mg(2+) is bound by residues D393, I394, and D437. Residues 393-398, 435-437, and R481 each bind ATP; these read DIVGFT and LGD. Composition is skewed to polar residues over residues 607-618 and 670-680; these read SDSHTNCTQPET and ESSTGDTLTNS. The segment at 607–680 is disordered; it reads SDSHTNCTQP…SSTGDTLTNS (74 aa). The helical transmembrane segment at 779–799 threads the bilayer; it reads SLQDVLLNYFIFVLLSVACLL. At 800–810 the chain is on the extracellular side; the sequence is KPGTNTVSPPT. Residues 811-831 form a helical membrane-spanning segment; that stretch reads LALVLLSVCGLLGFLSLLVSV. Topologically, residues 832-859 are cytoplasmic; it reads RMAFYLEDMLLCTRRLLEIISGWVPRHF. Residues 860–880 traverse the membrane as a helical segment; sequence IGTVLVCLPAAVIFSYLSSDF. Residues 881–883 lie on the Extracellular side of the membrane; that stretch reads YTD. The helical transmembrane segment at 884 to 904 threads the bilayer; sequence IHYTMFLCSALLIPMVQYCNF. Residues 905–911 lie on the Cytoplasmic side of the membrane; sequence CQLSSSA. Residues 912-932 traverse the membrane as a helical segment; the sequence is LLLATITGATMLILIYLPLCP. Residues 933 to 966 are Extracellular-facing; the sequence is QRPPLDPGTDIEANLSTSNSSYETLDNPRTELPF. Residues N946 and N951 are each glycosylated (N-linked (GlcNAc...) asparagine). The helical transmembrane segment at 967-987 threads the bilayer; the sequence is TRLGQEIAVAYFLLLLLVWFL. Topologically, residues 988 to 1305 are cytoplasmic; the sequence is NREFDVSYRL…EERGRDGGAR (318 aa). Residues K1099, 1176–1178, 1183–1187, and K1223 contribute to the ATP site; these read DIW and NIASR. A disordered region spans residues 1261–1305; it reads SIGRSPTDEISSLVTGGKGAVELGSGEAERKREKAEERGRDGGAR. Over residues 1287-1305 the composition is skewed to basic and acidic residues; that stretch reads EAERKREKAEERGRDGGAR.

It belongs to the adenylyl cyclase class-4/guanylyl cyclase family. Mg(2+) serves as cofactor. It depends on Mn(2+) as a cofactor. In terms of tissue distribution, detected in oocytes.

The protein localises to the cell membrane. It carries out the reaction ATP = 3',5'-cyclic AMP + diphosphate. In terms of biological role, adenylyl cyclase that catalyzes the formation of the signaling molecule cAMP in response to activation of G protein-coupled receptors. The polypeptide is Adenylate cyclase type 9 (adcy9) (Xenopus laevis (African clawed frog)).